The sequence spans 345 residues: Trace amine-associated receptor 6 (345 aa).

Residues 1 to 32 (MSSNSSLLVAVQLCYANVNGSCVKIPFSPGSR) lie on the Extracellular side of the membrane. Residues asparagine 4 and asparagine 19 are each glycosylated (N-linked (GlcNAc...) asparagine). Disulfide bonds link cysteine 22/cysteine 186 and cysteine 105/cysteine 190. A helical membrane pass occupies residues 33–53 (VILYIVFGFGAVLAVFGNLLV). The Cytoplasmic segment spans residues 54–68 (MISILHFKQLHSPTN). A helical membrane pass occupies residues 69–89 (FLVASLACADFLVGVTVMPFS). The Extracellular segment spans residues 90–107 (MVRTVESCWYFGRSFCTF). A helical membrane pass occupies residues 108–128 (HTCCDVAFCYSSLFHLCFISI). Residues 129–147 (DRYIAVTDPLVYPTKFTVS) lie on the Cytoplasmic side of the membrane. Residues 148 to 168 (VSGICISVSWILPLMYSGAVF) form a helical membrane-spanning segment. Over 169–202 (YTGVYDDGLEELSDALNCIGGCQTVVNQNWVLTD) the chain is Extracellular. A helical transmembrane segment spans residues 203-223 (FLSFFIPTFIMIILYGNIFLV). Residues 224–259 (ARRQAKKIENTGSKTESSSESYKARVARRERKAAKT) are Cytoplasmic-facing. Residues 260-276 (LGVTVVAFMISWLPYSI) traverse the membrane as a helical segment. The Extracellular segment spans residues 277–282 (DSLIDA). The chain crosses the membrane as a helical span at residues 283–302 (FMGFITPACIYEICCWCAYY). Over 303–345 (NSAMNPLIYALFYPWFRKAIKVIVTGQVLKNSSATMNLFSEHI) the chain is Cytoplasmic.

The protein belongs to the G-protein coupled receptor 1 family. Expressed at low abundance in various brain tissues, as well as in fetal liver, but not in the cerebellum or placenta. In the brain, comparable levels of expression in basal ganglia, frontal cortex, substantia nigra, amygdala and hippocampus, highest expression in hippocampus and lowest expression in basal ganglia.

Its subcellular location is the cell membrane. Its function is as follows. Olfactory receptor specific for trace amines, such as beta-phenylethylamine (beta-PEA). Trace amine compounds are enriched in animal body fluids and act on trace amine-associated receptors (TAARs) to elicit both intraspecific and interspecific innate behaviors. Beta-PEA-binding causes a conformation change that triggers signaling via G(s)-class of G alpha proteins (GNAL or GNAS). The protein is Trace amine-associated receptor 6 of Homo sapiens (Human).